A 409-amino-acid chain; its full sequence is Nucleoprotein (409 aa).

2 disordered regions span residues 1–84 (MASG…KGGR) and 121–194 (ADTK…DSGD). Over residues 15–31 (PVIKLGGPKPPKVGSSG) the composition is skewed to low complexity. The segment at 29-160 (SSGNASWFQA…GNFRWDFIPL (132 aa)) is RNA-binding. In terms of domain architecture, CoV N NTD spans 31 to 156 (GNASWFQAIK…GGPDGNFRWD (126 aa)). The segment covering 70–84 (YWRRQARFKPGKGGR) has biased composition (basic residues). Residues 162-179 (RGRSGRSTAASSAAASRA) are compositionally biased toward low complexity. Positions 180-192 (PSREGSRGRRSDS) are enriched in basic and acidic residues. Ser-190 and Ser-192 each carry phosphoserine; by host. Positions 215–331 (TKAKADEMAH…QCVDGVGTRP (117 aa)) constitute a CoV N CTD domain. Residues 226 to 333 (RYCKRTIPPN…VDGVGTRPKD (108 aa)) form a dimerization region. Cystine bridges form between Cys-281–Cys-308 and Cys-320–Cys-323. Positions 327–396 (VGTRPKDDEP…QLEFYDEPKV (70 aa)) are disordered. A compositionally biased stretch (basic residues) spans 358–367 (QRPKKEKKLK). Positions 368-384 (KQDDEADKALTSDEERN) are enriched in basic and acidic residues. Thr-378 carries the post-translational modification Phosphothreonine; by host. Residue Ser-379 is modified to Phosphoserine; by host.

Belongs to the gammacoronavirus nucleocapsid protein family. As to quaternary structure, homooligomer. Both monomeric and oligomeric forms interact with RNA. Interacts with protein M. Interacts with NSP3; this interaction serves to tether the genome to the newly translated replicase-transcriptase complex at a very early stage of infection. In terms of processing, ADP-ribosylated. The ADP-ribosylation is retained in the virion during infection. Post-translationally, phosphorylated on serine and threonine residues.

It is found in the virion. It localises to the host endoplasmic reticulum-Golgi intermediate compartment. The protein localises to the host Golgi apparatus. In terms of biological role, packages the positive strand viral genome RNA into a helical ribonucleocapsid (RNP) and plays a fundamental role during virion assembly through its interactions with the viral genome and membrane protein M. Plays an important role in enhancing the efficiency of subgenomic viral RNA transcription as well as viral replication. The chain is Nucleoprotein from Gallus gallus (Chicken).